The sequence spans 59 residues: Small, acid-soluble spore protein H (59 aa).

The protein belongs to the SspH family.

Its subcellular location is the spore core. This is Small, acid-soluble spore protein H from Bacillus licheniformis (strain ATCC 14580 / DSM 13 / JCM 2505 / CCUG 7422 / NBRC 12200 / NCIMB 9375 / NCTC 10341 / NRRL NRS-1264 / Gibson 46).